Here is a 53-residue protein sequence, read N- to C-terminus: uncharacterized protein (53 aa).

The first 19 residues, 1–19 (MKLLTILILFYSFFMNLQA), serve as a signal peptide directing secretion.

This is an uncharacterized protein from Autographa californica nuclear polyhedrosis virus (AcMNPV).